The primary structure comprises 122 residues: Large ribosomal subunit protein uL14 (122 aa).

Belongs to the universal ribosomal protein uL14 family. As to quaternary structure, part of the 50S ribosomal subunit. Forms a cluster with proteins L3 and L19. In the 70S ribosome, L14 and L19 interact and together make contacts with the 16S rRNA in bridges B5 and B8.

In terms of biological role, binds to 23S rRNA. Forms part of two intersubunit bridges in the 70S ribosome. In Chlorobium chlorochromatii (strain CaD3), this protein is Large ribosomal subunit protein uL14.